We begin with the raw amino-acid sequence, 282 residues long: Ribosome biogenesis GTPase A (282 aa).

In terms of domain architecture, CP-type G spans 14–178 (RREVTEKLKL…LLDTPGILWP (165 aa)). Residues 58 to 61 (NKAD), 86 to 87 (NS), 130 to 135 (NVGKST), and Gly174 contribute to the GTP site.

It belongs to the TRAFAC class YlqF/YawG GTPase family. MTG1 subfamily. In terms of assembly, interacts with ctc. Interacts with the immature 50S ribosome subunit. 2 molecules of rbgA bind to one 50S subunit.

It is found in the cytoplasm. Its function is as follows. Essential protein that is required for a late step of 50S ribosomal subunit assembly. Has GTPase activity that is stimulated by interaction with the immature 50S ribosome subunit. Binds to the 23S rRNA. Required for the association of ribosomal proteins rplP and rpmA with the large subunit. The protein is Ribosome biogenesis GTPase A (rbgA) of Bacillus spizizenii (strain ATCC 23059 / NRRL B-14472 / W23) (Bacillus subtilis subsp. spizizenii).